The sequence spans 479 residues: Anaerobic nitric oxide reductase flavorubredoxin (479 aa).

The tract at residues 30 to 210 (LRGSSYNSYL…PFSRLVTPKI (181 aa)) is zinc metallo-hydrolase. Residues His79, Glu81, Asp83, His147, Asp166, and His227 each contribute to the Fe cation site. A Flavodoxin-like domain is found at 254 to 393 (ITIFYDTMSN…LCREHGREIA (140 aa)). Residues 260 to 264 (TMSNN) and 342 to 369 (AFGS…EMSL) each bind FMN. The Rubredoxin-like domain occupies 423–474 (GPRMQCSVCQWIYDPAKGEPMQDVAPGTPWSEVPDNFLCPECSLGKDVFDEL). Fe cation is bound by residues Cys428, Cys431, Cys461, and Cys464.

In the N-terminal section; belongs to the zinc metallo-hydrolase group 3 family. Homotetramer. Fe cation serves as cofactor. FMN is required as a cofactor.

Its subcellular location is the cytoplasm. The protein operates within nitrogen metabolism; nitric oxide reduction. In terms of biological role, anaerobic nitric oxide reductase; uses NADH to detoxify nitric oxide (NO), protecting several 4Fe-4S NO-sensitive enzymes. Has at least 2 reductase partners, only one of which (NorW, flavorubredoxin reductase) has been identified. NO probably binds to the di-iron center; electrons enter from the NorW at rubredoxin and are transferred sequentially to the FMN center and the di-iron center. Also able to function as an aerobic oxygen reductase. The protein is Anaerobic nitric oxide reductase flavorubredoxin of Shigella flexneri serotype 5b (strain 8401).